A 285-amino-acid chain; its full sequence is Secreted RxLR effector protein 106 (285 aa).

An N-terminal signal peptide occupies residues 1–24 (MSVRYAGLLLAAVAVSAHINEVNS). The short motif at 42-54 (RDLRSADNGNEER) is the RxLR-dEER element. Asparagine 182 and asparagine 187 each carry an N-linked (GlcNAc...) asparagine glycan. The span at 220–229 (IEGDKEKKGG) shows a compositional bias: basic and acidic residues. A disordered region spans residues 220–262 (IEGDKEKKGGPDYVEGTESRGKKRGQTEAPDLEPGLTPKQKRL). The Bipartite nuclear localization signal motif lies at 239–264 (RGKKRGQTEAPDLEPGLTPKQKRLKR).

This sequence belongs to the RxLR effector family. In terms of assembly, interacts with host RCD1 and SRO1 transcription co-regulators.

The protein localises to the secreted. It localises to the host nucleus. Functionally, secreted effector that suppresses pathogen-associated molecular pattern (PAMP)-triggered immunity (PTI) in host plants. Binds to RCD1 and SRO1 transcription co-regulators to attenuate transcriptional activation of salicylic acid (SA)-induced defense genes and alters plant growth responses to light. Suppresses SA signal transduction but not SA levels. In Hyaloperonospora arabidopsidis (strain Emoy2) (Downy mildew agent), this protein is Secreted RxLR effector protein 106.